We begin with the raw amino-acid sequence, 323 residues long: Dehydrogenase/reductase SDR family member 7B (323 aa).

At 1-4 (MDLT) the chain is on the cytoplasmic side. The chain crosses the membrane as a helical; Signal-anchor for type II membrane protein span at residues 5–25 (SWAIFPLLLASIGVYGLYKLL). The Lumenal portion of the chain corresponds to 26 to 272 (QKLRSGAYLQ…AVGERRKELL (247 aa)). The NAD(+) site is built by Ser46 and Leu48. A substrate-binding site is contributed by Ser178. The NAD(+) site is built by Tyr191, Lys195, and Thr226. The active-site Proton acceptor is the Tyr191.

Belongs to the short-chain dehydrogenases/reductases (SDR) family.

The protein localises to the endoplasmic reticulum membrane. Its function is as follows. Putative oxidoreductase. The protein is Dehydrogenase/reductase SDR family member 7B (dhrs7b) of Xenopus laevis (African clawed frog).